The primary structure comprises 270 residues: MTQLEGPENPDRIGALILFARRWSLEIIGLLLIGIAGMLFLELQPTIPRFWQVSFLAAVFASPIAYYTGSTVVRWLYDPKWLYLIDLSAAEEKGSLYRLPESQFRDLEVLDGQLDRLAPGLYVGKRVDLENNRVAGTWRGTLSDRDLLLSLRKVRECRGQLEEDARQGFILRSSAYTVVRRAVRDTTMQVVKTFERGSLPDSGEAMNNAIHSELEEFGITDNLEETIEDLAEEKLADSDLEADSDDSESFEFVENPEPSENGSEPTIKND.

Residues 235–270 (LADSDLEADSDDSESFEFVENPEPSENGSEPTIKND) are disordered. A compositionally biased stretch (acidic residues) spans 238–251 (SDLEADSDDSESFE). Over residues 255-270 (NPEPSENGSEPTIKND) the composition is skewed to low complexity.

This is an uncharacterized protein from Halorubrum sp. PV6 (HRPV-1).